The sequence spans 459 residues: MEEGDFSGSSVRSEVTDGRNTTTTTETRTTSELQPKPLVLRLLEVQNGDEAEAVGEEGQEEDYEGSKTHKSHEVSASFRSHNSSDPPQSRKASDSLRSRKGIEPLEPRKTSDSFRSLMGSDPLQSSERQEDGKDDLFPNAVIMTSPSLIARYLPRLQLASLRAHPVTRDLVKKCFYSRKRVQDLSKPKKQWGTPDRRLFWGNQDPIRPVSEAALKAKLSKRIEDLAQPRLVSRHYVPNRIQYYYSCGRESVIWEISPPALVTRPSKRIQKLAKPNKFKAQSLIKRETVPGTTRYSDPSPRILRLSIAKGTNPSYLPPKTLETKISFSTLSAVATPRIVDLAHPRIKIEGLCYERERSELPIRPVAPAALLANPSKRTIFLAKSKRVHEDYLPIRDARWPVSYAATHSQVSERVQELANPHTRGPANLVYYDPNVFKVKPSALKAHCSDRVKELAEPIVR.

Residues 1 to 138 (MEEGDFSGSS…QEDGKDDLFP (138 aa)) are disordered. Residues 21–30 (TTTTTETRTT) show a composition bias toward low complexity. Residues 47-63 (NGDEAEAVGEEGQEEDY) are compositionally biased toward acidic residues. Residues 64–73 (EGSKTHKSHE) show a composition bias toward basic and acidic residues. Over residues 77–87 (SFRSHNSSDPP) the composition is skewed to polar residues. Basic and acidic residues-rich tracts occupy residues 91 to 112 (KASD…KTSD) and 127 to 136 (ERQEDGKDDL). THEG repeat units lie at residues 172-190 (KKCF…PKKQ), 212-231 (AALK…PRLV), 258-277 (PALV…PNKF), 291-310 (TTRY…AKGT), 327-346 (STLS…PRIK), 367-386 (AALL…SKRV), 403-422 (AATH…PHTR), and 440-459 (SALK…PIVR).

The sequence is that of Sperm microtubule associated protein 2-like from Mus musculus (Mouse).